Reading from the N-terminus, the 241-residue chain is NADPH-dependent FMN reductase ArsH (241 aa).

Position 43 to 50 (43 to 50 (SLRTVSYS)) interacts with FMN.

The protein belongs to the ArsH family. Homotetramer. FMN serves as cofactor.

Its function is as follows. Has NADPH-dependent FMN reductase activity. No activity with NADH. May play a role in resistance to heavy metal toxicity. In Rhizobium meliloti (strain 1021) (Ensifer meliloti), this protein is NADPH-dependent FMN reductase ArsH.